The primary structure comprises 163 residues: MARLFVAVALFGVVAFAAAEKEWTGKTWLGSWASTDRAENWEAFVDALGLPSDQYPREVQRTIHTIYKQGDKYHHEVSIPSKNFKKAIEYTLGTETDVQHGPHTIKLKYTEDGEKLVADVQIPSKNKQIHDIYEVQGDTLTKTYKVGDVVAKRWFTREANPTA.

Residues 1–19 (MARLFVAVALFGVVAFAAA) form the signal peptide. An SAHS-c1 region spans residues 22-51 (EWTGKTWLGSWASTDRAENWEAFVDALGLP). An SAHS-c2 region spans residues 67–95 (YKQGDKYHHEVSIPSKNFKKAIEYTLGTE). Residues 108–157 (KYTEDGEKLVADVQIPSKNKQIHDIYEVQGDTLTKTYKVGDVVAKRWFTR) form an SAHS-c3 region.

The protein belongs to the Secretory-abundant heat soluble protein (SAHS) family.

The protein localises to the secreted. Its function is as follows. Secreted heat soluble protein acting as a molecular shield in water-deficient condition. Tardigrade-specific intrinsically disordered proteins (TDPs) are essential for desiccation tolerance by forming non-crystalline amorphous solids upon desiccation, and this vitrified state mirrors their protective capabilities. The chain is Secretory-abundant heat soluble protein 53582 from Hypsibius exemplaris (Freshwater tardigrade).